A 109-amino-acid polypeptide reads, in one-letter code: Sperm-specific class P protein 9/11 (109 aa).

The MSP domain occupies 2-109 (SLTADPPACT…TVTIPMSATA (108 aa)).

As to expression, expressed at higher level in testis.

This chain is Sperm-specific class P protein 9/11 (ssp-9), found in Caenorhabditis elegans.